The chain runs to 306 residues: Non-homologous end joining protein Ku 2 (306 aa).

The 186-residue stretch at 21 to 206 folds into the Ku domain; it reads ISFGLVNIGV…EVSKQEIDMA (186 aa). Positions 233–306 are disordered; the sequence is LIDAKTKGTK…GSRDKTRKRA (74 aa). Residues 274 to 290 show a composition bias toward basic residues; it reads RTSRRKTTASASRRRSS. Positions 291–300 are enriched in basic and acidic residues; the sequence is SNREKTGSRD.

The protein belongs to the prokaryotic Ku family. In terms of assembly, homodimer. Interacts with LigD.

Its function is as follows. With LigD forms a non-homologous end joining (NHEJ) DNA repair enzyme, which repairs dsDNA breaks with reduced fidelity. Binds linear dsDNA with 5'- and 3'- overhangs but not closed circular dsDNA nor ssDNA. Recruits and stimulates the ligase activity of LigD. The protein is Non-homologous end joining protein Ku 2 of Saccharopolyspora erythraea (strain ATCC 11635 / DSM 40517 / JCM 4748 / NBRC 13426 / NCIMB 8594 / NRRL 2338).